The sequence spans 67 residues: Peptide Hp1239 (67 aa).

The N-terminal stretch at 1–23 is a signal peptide; that stretch reads MKTQFTVLLITLVLFQMLSQSEA. Residue Phe36 is modified to Phenylalanine amide. Residues 40-67 constitute a propeptide that is removed on maturation; that stretch reads GLSDLSDLDELFDGEITKADLDLLREIM.

It belongs to the non-disulfide-bridged peptide (NDBP) superfamily. Short antimicrobial peptide (group 4) family. In terms of tissue distribution, expressed by the venom gland.

It localises to the secreted. The protein resides in the target cell membrane. Its function is as follows. Amphipathic peptide with antibacterial activities. Shows antiviral activities against the herpes simplex virus type-1. It potently inhibits the initial infection by provoking the rupture of viral envelop and the dissociation of proteins from the virions (EC(50) is 0.41 uM). It also effectively inhibits viral attachment (EC(50) is 5.73 uM), viral entry (EC(50) is 4.32 uM) and viral proliferation after infection (EC(50) is 8.41 uM). Morever, it enters mammalian tested cells (Vero) and reduces the intracellular infectivity. This is Peptide Hp1239 from Heterometrus petersii (Asian forest scorpion).